A 322-amino-acid polypeptide reads, in one-letter code: Aspartate carbamoyltransferase catalytic subunit (322 aa).

2 residues coordinate carbamoyl phosphate: arginine 65 and threonine 66. Lysine 93 contributes to the L-aspartate binding site. Arginine 115, histidine 143, and glutamine 146 together coordinate carbamoyl phosphate. The L-aspartate site is built by arginine 176 and arginine 230. Positions 271 and 272 each coordinate carbamoyl phosphate.

This sequence belongs to the aspartate/ornithine carbamoyltransferase superfamily. ATCase family. Heterododecamer (2C3:3R2) of six catalytic PyrB chains organized as two trimers (C3), and six regulatory PyrI chains organized as three dimers (R2).

It carries out the reaction carbamoyl phosphate + L-aspartate = N-carbamoyl-L-aspartate + phosphate + H(+). Its pathway is pyrimidine metabolism; UMP biosynthesis via de novo pathway; (S)-dihydroorotate from bicarbonate: step 2/3. Catalyzes the condensation of carbamoyl phosphate and aspartate to form carbamoyl aspartate and inorganic phosphate, the committed step in the de novo pyrimidine nucleotide biosynthesis pathway. This is Aspartate carbamoyltransferase catalytic subunit from Brucella anthropi (strain ATCC 49188 / DSM 6882 / CCUG 24695 / JCM 21032 / LMG 3331 / NBRC 15819 / NCTC 12168 / Alc 37) (Ochrobactrum anthropi).